The chain runs to 480 residues: Cobyric acid synthase (480 aa).

In terms of domain architecture, GATase cobBQ-type spans 249–436; sequence KLKVVVPVLT…LHGFLDSEAA (188 aa). The active-site Nucleophile is C330. H428 is an active-site residue.

This sequence belongs to the CobB/CobQ family. CobQ subfamily.

Its pathway is cofactor biosynthesis; adenosylcobalamin biosynthesis. Functionally, catalyzes amidations at positions B, D, E, and G on adenosylcobyrinic A,C-diamide. NH(2) groups are provided by glutamine, and one molecule of ATP is hydrogenolyzed for each amidation. This is Cobyric acid synthase from Vibrio vulnificus (strain YJ016).